We begin with the raw amino-acid sequence, 225 residues long: Membrane-spanning 4-domains subfamily A member 4D (225 aa).

The Cytoplasmic segment spans residues 1 to 42 (MQGLAQTTMAVVPGGAPPSENSVIKSQMWNKNKEKFLKGEPK). The helical transmembrane segment at 43–63 (VLGAIQVMIAFINFSLGIIII) threads the bilayer. Residues 64 to 73 (LNRVSERFMS) are Extracellular-facing. Residues 74 to 94 (VLLLAPFWGSIMFIFSGSLSI) traverse the membrane as a helical segment. Residues 95-113 (AAGVKPTKAMIISSLSVNT) lie on the Cytoplasmic side of the membrane. The chain crosses the membrane as a helical span at residues 114–134 (ISSVLAVAASIIGVISVISGV). Topologically, residues 135–148 (FRQFRSQPAIASLD) are extracellular. The helical transmembrane segment at 149–169 (VLMTILNMLEFCIAVSVSAFG) threads the bilayer. The Cytoplasmic portion of the chain corresponds to 170–225 (CKASCCNSSEVLVVLPSNSAVTVTAPPMILQPLPPSECQGKNVPENLYRNQPGEIV).

It belongs to the MS4A family. Expressed in thymus, spleen, peripheral lymph node, liver, kidney, heart, colon, lung, and testes.

Its subcellular location is the membrane. May be involved in signal transduction as a component of a multimeric receptor complex. This chain is Membrane-spanning 4-domains subfamily A member 4D (Ms4a4d), found in Mus musculus (Mouse).